Reading from the N-terminus, the 230-residue chain is Cytidylate kinase (230 aa).

ATP is bound at residue 12–20; that stretch reads GPSGAGKGT.

This sequence belongs to the cytidylate kinase family. Type 1 subfamily.

The protein resides in the cytoplasm. The enzyme catalyses CMP + ATP = CDP + ADP. It carries out the reaction dCMP + ATP = dCDP + ADP. The protein is Cytidylate kinase of Shewanella baltica (strain OS223).